Consider the following 245-residue polypeptide: Derlin-1 (245 aa).

The Cytoplasmic portion of the chain corresponds to 1-5 (MDLEN). A helical transmembrane segment spans residues 6-26 (FLLGIPIVTRYWFLASTIIPL). Residues 27–57 (LGRFGFINVQWMFLQWDLVVNKFQFWRPLTA) lie on the Lumenal side of the membrane. A helical membrane pass occupies residues 58–78 (LIYYPVTPQTGFHWLMMCYFL). Over 79 to 100 (YNYSKALESETYRGRSADYLFM) the chain is Cytoplasmic. The helical transmembrane segment at 101 to 121 (LIFNWFFCSGLCMALDIYFLL) threads the bilayer. Residues 122–166 (EPMVISVLYVWCQVNKDTIVSFWFGMRFPARYLPWVLWGFNAVLR) lie on the Lumenal side of the membrane. A helical transmembrane segment spans residues 167 to 187 (GGGTNELVGILVGHAYFFVAL). Residues 188–245 (KYPDEYGVDLISTPEFLHRLIPDEDGGIHGQDGNIRGARQQPRGHQWPGGVGARLGGN) lie on the Cytoplasmic side of the membrane. A disordered region spans residues 218–245 (QDGNIRGARQQPRGHQWPGGVGARLGGN). A compositionally biased stretch (gly residues) spans 234-245 (WPGGVGARLGGN).

This sequence belongs to the derlin family.

It localises to the endoplasmic reticulum membrane. In terms of biological role, specifically required for the degradation process of misfolded endoplasmic reticulum (ER) luminal proteins. Participates in the transfer of misfolded proteins from the ER to the cytosol, where they are destroyed by the proteasome in a ubiquitin-dependent manner. The sequence is that of Derlin-1 from Caenorhabditis elegans.